A 393-amino-acid polypeptide reads, in one-letter code: Cytotoxic and regulatory T-cell molecule (393 aa).

Positions 1–16 (MWWGALSLLFWVPVQA) are cleaved as a signal peptide. Residues 17–111 (AFLKMETVTV…SVKTKQVRVT (95 aa)) enclose the Ig-like V-type domain. Topologically, residues 17–289 (AFLKMETVTV…HTGLARRKSG (273 aa)) are extracellular. Disulfide bonds link C36-C96 and C139-C194. Residues N85 and N176 are each glycosylated (N-linked (GlcNAc...) asparagine). One can recognise an Ig-like C2-type domain in the interval 119–208 (PTVEALVLRR…EGLHGRKLVA (90 aa)). Residues 218–228 (DQETSDQETSD) are compositionally biased toward acidic residues. Residues 218 to 280 (DQETSDQETS…GLSTEASAQH (63 aa)) form a disordered region. Over residues 229–246 (APEQSSLSSQALQQPTST) the composition is skewed to low complexity. Residues 247–256 (VSMMENSSIP) show a composition bias toward polar residues. A compositionally biased stretch (basic and acidic residues) spans 257–267 (ETDKEEKEHAT). The span at 270 to 280 (PGLSTEASAQH) shows a compositional bias: polar residues. The helical transmembrane segment at 290-310 (ILLLTLVSFLIFILFIIVQLF) threads the bilayer. The Cytoplasmic segment spans residues 311 to 393 (IMKLRKAHVV…KHSRVPESIV (83 aa)). The interval 333 to 356 (ESYRSRSNNEETSSQENSSQAPQS) is disordered. Low complexity predominate over residues 342–352 (EETSSQENSSQ). The PDZ-binding motif lies at 390–393 (ESIV).

This sequence belongs to the nectin family. Monomer. May form homodimer (via Ig-like V-type domain). Interacts (via Ig-like V-type domain) with CADM1 (via Ig-like V-type domain); the interaction competes with CRTAM homodimerization and CADM1 homodimerization. Interacts (via PDZ-binding motif) with SCRIB (via PDZ domain 3); the interaction promotes CRTAM and SCRIB polarization in a subset of CD4+ T-cells. In terms of tissue distribution, in the immune system, expression is restricted to activated class-I MHC-restricted cells, including NKT, NK and CD8+ T-cells (at protein level). Transiently expressed in activated CD8+ T-cells and a subset of activated CD4+ T-cells (at protein level). Expressed in activated intestinal T-cells, specifically intraepithelial CD4+ CD8+ T-cells, intraepithelial CD4+ T-cells and, CD8+ T-cells in the intestine epithelium, lamina propria, Peyer's Patches and mesenteric lymph nodes. Also expressed in spleen, brain and testis.

Its subcellular location is the cell membrane. In terms of biological role, mediates heterophilic cell-cell adhesion which regulates the activation, differentiation and tissue retention of various T-cell subsets. Interaction with CADM1 promotes natural killer (NK) cell cytotoxicity and IFNG/interferon-gamma secretion by CD8+ T-cells in vitro as well as NK cell-mediated rejection of tumors expressing CADM1 in vivo. Regulates CD8+ T-cell proliferation in response to T-cell receptor (TCR) activation. Appears to be dispensable for CD8+ T-cell-mediated cytotoxicity. Interaction with SCRIB promotes the late phase of cellular polarization of a subset of CD4+ T-cells, which in turn regulates TCR-mediated proliferation and IFNG, IL17 and IL22 production. By interacting with CADM1 on CD8+ dendritic cells, regulates the retention of activated CD8+ T-cells within the draining lymph node. Required for the intestinal retention of intraepithelial CD4+ CD8+ T-cells and, to a lesser extent, intraepithelial and lamina propria CD8+ T-cells and CD4+ T-cells. Interaction with CADM1 promotes the adhesion to gut-associated CD103+ dendritic cells, which may facilitate the expression of gut-homing and adhesion molecules on T-cells and the conversion of CD4+ T-cells into CD4+ CD8+ T-cells. The sequence is that of Cytotoxic and regulatory T-cell molecule from Mus musculus (Mouse).